Here is a 573-residue protein sequence, read N- to C-terminus: Membrane protein insertase YidC (573 aa).

6 helical membrane passes run 6-26 (VFLI…WGKD), 355-375 (FSIM…LHSF), 379-399 (WGWA…PLSA), 446-466 (GGCL…WVLV), 488-508 (PYFI…KLTP), and 524-544 (PLVF…YWVV).

Belongs to the OXA1/ALB3/YidC family. Type 1 subfamily. In terms of assembly, interacts with the Sec translocase complex via SecD. Specifically interacts with transmembrane segments of nascent integral membrane proteins during membrane integration.

Its subcellular location is the cell inner membrane. In terms of biological role, required for the insertion and/or proper folding and/or complex formation of integral membrane proteins into the membrane. Involved in integration of membrane proteins that insert both dependently and independently of the Sec translocase complex, as well as at least some lipoproteins. Aids folding of multispanning membrane proteins. The sequence is that of Membrane protein insertase YidC from Xanthomonas campestris pv. campestris (strain ATCC 33913 / DSM 3586 / NCPPB 528 / LMG 568 / P 25).